We begin with the raw amino-acid sequence, 430 residues long: Dihydrolipoyllysine-residue acetyltransferase component of pyruvate dehydrogenase complex (430 aa).

The Lipoyl-binding domain occupies 2-77; the sequence is AFEFRLPDIG…VVGDVIVKID (76 aa). The residue at position 43 (Lys43) is an N6-lipoyllysine. The disordered stretch occupies residues 80 to 122; sequence DAEDMQFKGHDDDSSSKEEPAKEEAPAEQAPVATQTEEVDENR. A compositionally biased stretch (basic and acidic residues) spans 84–104; that stretch reads MQFKGHDDDSSSKEEPAKEEA. A Peripheral subunit-binding (PSBD) domain is found at 125–162; it reads KAMPSVRKYAREKGVNIKAVSGSGKNGRITKEDVDAYL. A disordered region spans residues 165-199; the sequence is GAPTASNESAASATNEEVAETPAAPAAVSLEGDFP. Low complexity predominate over residues 168 to 192; that stretch reads TASNESAASATNEEVAETPAAPAAV. Residue His401 is part of the active site.

Belongs to the 2-oxoacid dehydrogenase family. As to quaternary structure, forms a 24-polypeptide structural core with octahedral symmetry. Requires (R)-lipoate as cofactor.

It catalyses the reaction N(6)-[(R)-dihydrolipoyl]-L-lysyl-[protein] + acetyl-CoA = N(6)-[(R)-S(8)-acetyldihydrolipoyl]-L-lysyl-[protein] + CoA. The pyruvate dehydrogenase complex catalyzes the overall conversion of pyruvate to acetyl-CoA and CO(2). It contains multiple copies of three enzymatic components: pyruvate dehydrogenase (E1), dihydrolipoamide acetyltransferase (E2) and lipoamide dehydrogenase (E3). This chain is Dihydrolipoyllysine-residue acetyltransferase component of pyruvate dehydrogenase complex (pdhC), found in Staphylococcus aureus (strain MRSA252).